A 71-amino-acid polypeptide reads, in one-letter code: UPF0346 protein SPP_0954 (71 aa).

It belongs to the UPF0346 family.

The polypeptide is UPF0346 protein SPP_0954 (Streptococcus pneumoniae (strain P1031)).